A 78-amino-acid chain; its full sequence is Large ribosomal subunit protein bL28 (78 aa).

The interval 1-28 (MSAYCQVTGRKPGFGKQVSHSHRHTSRR) is disordered.

Belongs to the bacterial ribosomal protein bL28 family.

This chain is Large ribosomal subunit protein bL28, found in Corynebacterium urealyticum (strain ATCC 43042 / DSM 7109).